We begin with the raw amino-acid sequence, 200 residues long: Max dimerization protein 3 (200 aa).

Disordered regions lie at residues 31-56 (SILP…DNVR) and 133-164 (RLLP…QEDL). One can recognise a bHLH domain in the interval 54–106 (NVRSVHNELEKHRRAQLRRCLEQLKQQVPLSMENSRHTTLSLLHRAKQHIKKL).

Efficient DNA binding requires dimerization with another bHLH protein. Binds DNA as a heterodimer with MAX. As to expression, expressed broadly throughout the CNS and the eye, starting at neurula stages.

It localises to the nucleus. Transcriptional repressor. Binds with MAX to form a sequence-specific DNA-binding protein complex which recognizes the core sequence 5'-CAC[GA]TG-3'. The polypeptide is Max dimerization protein 3 (mxd3) (Xenopus laevis (African clawed frog)).